A 606-amino-acid chain; its full sequence is WD repeat-containing protein 1 (606 aa).

WD repeat units lie at residues 4-45 (EIKK…LRNI), 48-87 (PAVA…IWDT), 93-135 (ILKY…LWDT), 138-176 (SVGE…FFEG), 180-218 (KFKF…IYDG), 224-263 (VCAL…IWDV), 270-306 (STFP…YLDK), 311-351 (KPLR…YWDS), 358-408 (SFSG…KLDV), 432-474 (LKDQ…VYSI), 480-518 (KDEG…VFSV), 523-561 (SENN…VWTL), and 566-604 (TKVK…EWTI). Residues Lys-28, Lys-81, Lys-95, and Lys-115 each carry the N6-acetyllysine modification. Tyr-238 is subject to Phosphotyrosine. An N6-acetyllysine modification is found at Lys-480.

This sequence belongs to the WD repeat AIP1 family.

It is found in the cytoplasm. It localises to the cytoskeleton. The protein localises to the cell projection. The protein resides in the podosome. Functionally, induces disassembly of actin filaments in conjunction with ADF/cofilin family proteins. Enhances cofilin-mediated actin severing. Involved in cytokinesis. Involved in chemotactic cell migration by restricting lamellipodial membrane protrusions. Involved in myocardium sarcomere organization. Required for cardiomyocyte growth and maintenance. Involved in megakaryocyte maturation and platelet shedding. Required for the establishment of planar cell polarity (PCP) during follicular epithelium development and for cell shape changes during PCP; the function seems to implicate cooperation with CFL1 and/or DSTN/ADF. Involved in the generation/maintenance of cortical tension. Involved in assembly and maintenance of epithelial apical cell junctions and plays a role in the organization of the perijunctional actomyosin belt. The protein is WD repeat-containing protein 1 (Wdr1) of Rattus norvegicus (Rat).